The sequence spans 241 residues: L-aspartate dehydrogenase (241 aa).

NAD(+) is bound by residues 10-11 (NI), Asp-28, 56-57 (AS), 63-64 (EY), 78-79 (IS), Ala-109, and Asn-164. The active site involves His-193.

The protein belongs to the L-aspartate dehydrogenase family. Homodimer.

The enzyme catalyses L-aspartate + NADP(+) + H2O = oxaloacetate + NH4(+) + NADPH + H(+). It catalyses the reaction L-aspartate + NAD(+) + H2O = oxaloacetate + NH4(+) + NADH + H(+). It functions in the pathway cofactor biosynthesis; NAD(+) biosynthesis; iminoaspartate from L-aspartate (dehydrogenase route): step 1/1. Competitively inhibited by L-malate and NH(4)(+). Functionally, specifically catalyzes the NAD or NADP-dependent dehydrogenation of L-aspartate to iminoaspartate. Does not show aspartate oxidase activity. Is also able to catalyze the reverse reaction, i.e. the reductive amination of oxaloacetate. This chain is L-aspartate dehydrogenase, found in Thermotoga maritima (strain ATCC 43589 / DSM 3109 / JCM 10099 / NBRC 100826 / MSB8).